The chain runs to 173 residues: Photosystem I assembly protein Ycf3 (173 aa).

3 TPR repeats span residues 35-68 (AYLY…EDNQ), 72-105 (GETL…NPKQ), and 120-153 (GRMA…YPGG).

Belongs to the Ycf3 family.

The protein resides in the cellular thylakoid membrane. Functionally, essential for the assembly of the photosystem I (PSI) complex. May act as a chaperone-like factor to guide the assembly of the PSI subunits. The polypeptide is Photosystem I assembly protein Ycf3 (Prochlorococcus marinus (strain NATL1A)).